Reading from the N-terminus, the 876-residue chain is MTDIDARLREDVHLLGELLGNTIRDQYGEAFLDKIEQIRKGAKADRRGSPGAELSASLDQLSEDELLPVARAFNQFLNLANIAEQYQLIHRRDESQPAPFEARVLPELLARLRAEGHSADALARQLGRLEIELVLTAHPTEVARRTLIQKYDAIAGQLAAQDHRDLTSAERGQIQERLQRLIAEAWHTEEIRRTRPTPVDEAKWGFAVIEHSLWQAIPNYLRKADKALFEATGLHLPLESAPIRFASWMGGDRDGNPNVTAAVTREVLLLARWMAADLYLRDIDHLAAELSMQQASPALLARAGDSAEPYRALLKQLRERLRATRNWAHAALSAAVPAGAEVLHNNRDLLEPLQLCYQSLHECGMGVIADGPLLDCLRRAVTFGLFLVRLDVRQDSSRHTSAMTEITDYLGLGRYEDWSEEDRITFLMRELSSRRPLLPGYFKPSADTAEVLATCREIAGAPAASLGSYVISMAGAASDVLAVQLLLKESGVLRPMRVVPLFETLADLDNAGPVMEKLLHMPGYRSRLQGPQEVMIGYSDSAKDAGTTAAAWAQYRAQERLVDICREQQVELLLFHGRGGTVGRGGGPAHAAILSQPPGSVAGRFRTTEQGEMIRFKFGLPDIAEQNLNLYLAAVLEATLLPPPPPQPAWRHLMDELASDGVRAYREVVRDNPQFVEYFRQSTPEQELGRLPLGSRPAKRRAGGIESLRAIPWIFGWTQTRLMLPAWLGWEAALSKALARGEGDLLGQMREQWPFFRTRIDMLEMVLAKADADIARSYDERLVEAELLPLGEHLRDLLSQACAVVLGLTGQSQLLAHSPDTLEFIRLRNTYLDPLHLLQAELLARSRKQQAPQGSPVEQALLVSVAGIAAGLRNTG.

Residues histidine 138 and lysine 543 contribute to the active site.

The protein belongs to the PEPCase type 1 family. Mg(2+) serves as cofactor.

It catalyses the reaction oxaloacetate + phosphate = phosphoenolpyruvate + hydrogencarbonate. In terms of biological role, forms oxaloacetate, a four-carbon dicarboxylic acid source for the tricarboxylic acid cycle. This is Phosphoenolpyruvate carboxylase from Pseudomonas fluorescens (strain ATCC BAA-477 / NRRL B-23932 / Pf-5).